Consider the following 87-residue polypeptide: Putative autophagy-related protein 8E (87 aa).

Basic and acidic residues predominate over residues 1–14 (MEERRKEKGKEGRR). Residues 1–30 (MEERRKEKGKEGRRGKATGHSVDKFSRSNL) are disordered. A lipid anchor (Phosphatidylethanolamine amidated glycine) is attached at Gly-87.

The protein belongs to the ATG8 family. In terms of assembly, interacts with ATG4. The C-terminal Gly is amidated with phosphatidylethanolamine by an activating system similar to that for ubiquitin.

The protein resides in the cytoplasmic vesicle. The protein localises to the autophagosome membrane. Its subcellular location is the vacuole membrane. It is found in the cytoplasm. It localises to the cytoskeleton. Ubiquitin-like modifier involved in autophagosomes formation. May mediate the delivery of the autophagosomes to the vacuole via the microtubule cytoskeleton. The protein is Putative autophagy-related protein 8E (ATG8E) of Oryza sativa subsp. japonica (Rice).